Here is a 130-residue protein sequence, read N- to C-terminus: Small ribosomal subunit protein uS9 (130 aa).

The protein belongs to the universal ribosomal protein uS9 family.

In Stutzerimonas stutzeri (strain A1501) (Pseudomonas stutzeri), this protein is Small ribosomal subunit protein uS9.